The following is a 604-amino-acid chain: Glutamine--fructose-6-phosphate aminotransferase [isomerizing] (604 aa).

C2 serves as the catalytic Nucleophile; for GATase activity. The 218-residue stretch at 2–219 (CGIMGAVSER…EGDSACVTTQ (218 aa)) folds into the Glutamine amidotransferase type-2 domain. SIS domains are found at residues 279–427 (LRAS…DNRA) and 454–594 (LASL…VDQP). K599 acts as the For Fru-6P isomerization activity in catalysis.

Homodimer.

The protein localises to the cytoplasm. The enzyme catalyses D-fructose 6-phosphate + L-glutamine = D-glucosamine 6-phosphate + L-glutamate. Its function is as follows. Catalyzes the first step in hexosamine metabolism, converting fructose-6P into glucosamine-6P using glutamine as a nitrogen source. The sequence is that of Glutamine--fructose-6-phosphate aminotransferase [isomerizing] from Legionella pneumophila (strain Lens).